We begin with the raw amino-acid sequence, 319 residues long: MAESWLLLLLALGCPALPTEVTTLLRPAQQGMGSTPFPSLAPPITLLVDGKQQTLVVCLVLDVAPPGFESPIWFSAGNGSSLDAFTYGPSPAEDGTWTRLAQLSLYSEELAAWDTLVCHTGPGAGDHGQSTQPLQLSGDASSARTCLWEPLRGTRALVLRLGALRLLLFKLLLLDVLLTCGRLHAPPAARGDPAGASGPGAPSLPAPHEVPRADSRLLPQPPPPRGSSSGPADRIRRNHGGTTGRGLSVSASPPLEPRDRRRRVHTRRPRRDPRNPVWEEGPPVLRAWSSGPSFSLSTSSLGAFLCNLPPPADPSFPGG.

Positions Met1–Ala16 are cleaved as a signal peptide. The Extracellular segment spans residues Leu17–Arg160. An intrachain disulfide couples Cys58 to Cys118. N-linked (GlcNAc...) asparagine glycosylation is present at Asn78. A helical membrane pass occupies residues Leu161–Gly181. The Cytoplasmic segment spans residues Arg182–Gly319. Over residues Ala189 to Pro207 the composition is skewed to low complexity. The tract at residues Ala189–Ser293 is disordered. The segment covering Arg260 to Arg271 has biased composition (basic residues).

Heterodimer with TCRB; disulfide linked. This heterodimer assembles with CD3 proteins into a signaling-competent pre-T-cell receptor complex. Interacts with RHBDD1.

Its subcellular location is the membrane. The protein localises to the cell membrane. Its function is as follows. Component of the pre-T-cell receptor complex (composed of PTCRA, TCRB and the CD3 complex) that has a crucial role in early T-cell development, particularly alpha-beta T cell differentiation. This Bos taurus (Bovine) protein is Pre T-cell antigen receptor alpha (PTCRA).